The following is a 655-amino-acid chain: DLSLSMKDDLDTIRNLGTKLAEEMRKLTSNFRLGFGSFVDKDISPFSYTAPRYQTNPCIGYKLFPNCVPSFGFRHLLPLTDRVDSFNEEVRKQRVSRNRDAPEGCFDAVLQAAVCKEKIGWRKDALHLLVFTTDDVPHIALDGKLGGLVQPHDGQCHLNEANEYTASNQMDYPSLALLGEKLAENNINLIFAVTKNHYMLYKNFTALIPGTTVEILDGDSKNIIQLIINAYNSIRSKVELSVWDQPEDLNLFFTATCQDGVSYPGQRKCEGLKIGDTASFEVSVEARSCPSRHTEHVFALQPVGCRDSLEVGVTYNCTCGCSVGLEPNSARCSGTGTYVCGLCECSPGYLGTRCECQDGENHSVYQNLCRDTEGKPLCSGRGDCSCNQCSCFESEFGKIYGPFCECDNFSCARNKGVLCSGHGECHCGECKCHAGYIGDNCNCSTDISTCRGRDGQICSERGHCLCGQCQCTEPGAFGEMCEKCPTCPDACSTKRDCVECPLLHSGKPDNQTCHSLCRDEVITWVDTIVKDDQEAVLCFYKTAKDCVMMFTYVELPSGKSNLTVLREPECGNTPNAMTILLAVVGSILLVGLALLAIWKLLVTIHDRREFAKFQSERSRARYEMASNPLYRKPISTHTVDFTFNKFNKSYNGTVD.

The VWFA domain occupies Asp1 to Ile234. The Extracellular segment spans residues Asp1–Asn575. Mg(2+)-binding residues include Ser3 and Ser5. Ca(2+)-binding residues include Ser5, Asp8, Asp9, and Asp40. A disulfide bridge connects residues Cys58 and Cys67. The Ca(2+) site is built by Asn98, Asp100, Pro102, and Glu103. Glu103 contacts Mg(2+). Cys115 and Cys156 form a disulfide bridge. Asn203 carries N-linked (GlcNAc...) asparagine glycosylation. Gly218 contributes to the Ca(2+) binding site. 13 disulfide bridges follow: Cys257–Cys269, Cys289–Cys317, Cys321–Cys340, Cys332–Cys343, Cys345–Cys354, Cys356–Cys386, Cys369–Cys384, Cys378–Cys389, Cys391–Cys404, Cys406–Cys427, Cys411–Cys425, Cys419–Cys430, and Cys432–Cys441. Residue Asn316 is glycosylated (N-linked (GlcNAc...) asparagine). 4 consecutive I-EGF domains span residues Cys321 to Glu355, Cys356 to Glu405, Cys406 to Asn442, and Cys443 to Glu482. N-linked (GlcNAc...) asparagine glycosylation is present at Asn408. N-linked (GlcNAc...) asparagine glycosylation occurs at Asn442. 9 disulfide bridges follow: Cys443/Cys466, Cys450/Cys464, Cys458/Cys469, Cys471/Cys481, Cys484/Cys487, Cys491/Cys538, Cys497/Cys517, Cys500/Cys513, and Cys546/Cys570. N-linked (GlcNAc...) asparagine glycosylation is found at Asn510 and Asn561. The helical transmembrane segment at Ala576 to Trp598 threads the bilayer. Topologically, residues Lys599 to Asp655 are cytoplasmic. Position 626 is a phosphoserine (Ser626).

The protein belongs to the integrin beta chain family. In terms of assembly, heterodimer of an alpha and a beta subunit. Beta-5 (ITGB5) associates with alpha-V (ITGAV). Interacts with MYO10. Interacts with DAB2. Integrin ITGAV:ITGB5 interacts with FBLN5 (via N-terminus). ITGAV:ITGB5 interacts with CCN3. Interacts with tensin TNS3; TNS3 also interacts with PEAK1, thus acting as an adapter molecule to bridge the association of PEAK1 with ITGB5.

Its subcellular location is the cell membrane. Integrin alpha-V/beta-5 (ITGAV:ITGB5) is a receptor for fibronectin. It recognizes the sequence R-G-D in its ligand. This is Integrin beta-5 (ITGB5) from Papio cynocephalus (Yellow baboon).